The sequence spans 338 residues: RNA 3'-terminal phosphate cyclase (338 aa).

Residues Q103 and Y283 to Q287 each bind ATP. H308 acts as the Tele-AMP-histidine intermediate in catalysis.

This sequence belongs to the RNA 3'-terminal cyclase family. Type 1 subfamily.

It is found in the cytoplasm. It catalyses the reaction a 3'-end 3'-phospho-ribonucleotide-RNA + ATP = a 3'-end 2',3'-cyclophospho-ribonucleotide-RNA + AMP + diphosphate. Functionally, catalyzes the conversion of 3'-phosphate to a 2',3'-cyclic phosphodiester at the end of RNA. The mechanism of action of the enzyme occurs in 3 steps: (A) adenylation of the enzyme by ATP; (B) transfer of adenylate to an RNA-N3'P to produce RNA-N3'PP5'A; (C) and attack of the adjacent 2'-hydroxyl on the 3'-phosphorus in the diester linkage to produce the cyclic end product. The biological role of this enzyme is unknown but it is likely to function in some aspects of cellular RNA processing. This is RNA 3'-terminal phosphate cyclase from Escherichia coli O8 (strain IAI1).